A 248-amino-acid chain; its full sequence is Protein GrpE (248 aa).

Residues 229 to 248 are disordered; it reads AAPKEDTLPAQENQSSPADS. Residues 238 to 248 show a composition bias toward polar residues; that stretch reads AQENQSSPADS.

Belongs to the GrpE family. As to quaternary structure, homodimer.

Its subcellular location is the cytoplasm. In terms of biological role, participates actively in the response to hyperosmotic and heat shock by preventing the aggregation of stress-denatured proteins, in association with DnaK and GrpE. It is the nucleotide exchange factor for DnaK and may function as a thermosensor. Unfolded proteins bind initially to DnaJ; upon interaction with the DnaJ-bound protein, DnaK hydrolyzes its bound ATP, resulting in the formation of a stable complex. GrpE releases ADP from DnaK; ATP binding to DnaK triggers the release of the substrate protein, thus completing the reaction cycle. Several rounds of ATP-dependent interactions between DnaJ, DnaK and GrpE are required for fully efficient folding. This is Protein GrpE from Trichormus variabilis (strain ATCC 29413 / PCC 7937) (Anabaena variabilis).